The sequence spans 189 residues: Probable nicotinate-nucleotide adenylyltransferase (189 aa).

It belongs to the NadD family.

It catalyses the reaction nicotinate beta-D-ribonucleotide + ATP + H(+) = deamido-NAD(+) + diphosphate. It participates in cofactor biosynthesis; NAD(+) biosynthesis; deamido-NAD(+) from nicotinate D-ribonucleotide: step 1/1. In terms of biological role, catalyzes the reversible adenylation of nicotinate mononucleotide (NaMN) to nicotinic acid adenine dinucleotide (NaAD). This is Probable nicotinate-nucleotide adenylyltransferase from Bacillus cereus (strain Q1).